A 369-amino-acid polypeptide reads, in one-letter code: MSDAYKLLVLAGDGIGPEVMREVARIVHWMSAHRGLKLEITEELVGAASLAVHGVPIRDEVIELARQSDAVLFGSVGDPAWSHVGFDKRPEVAILKLRKELELFANLRPAKLFDALIDASALKPEVVRGLDLMIVRETVGGIYFGEPRGIETLPDGSRRGINTEVYTTSEIERVARVAFDLARKRDNRVCSVEKCNVMESGLLWKEVVTDVHKREYPDVQLSHMLADNCAMQLVRDPNQFDVIVTGNLFGDILSDLASMLTGSLGMLPSATLGPVRADGKRNALYEPIHGSAPDIAGKGIANPLAQILSFAMLLRYSLNRAEDADLIEMAVSNVLASGLRTGDIMSPGMARVGTEMMGQAVLREMEKLA.

Substrate contacts are provided by Arg-98, Arg-108, Arg-136, and Asp-227. Residues Asp-227, Asp-251, and Asp-255 each contribute to the Mg(2+) site. An NAD(+)-binding site is contributed by 290 to 302 (GSAPDIAGKGIAN).

It belongs to the isocitrate and isopropylmalate dehydrogenases family. LeuB type 1 subfamily. In terms of assembly, homodimer. Mg(2+) is required as a cofactor. It depends on Mn(2+) as a cofactor.

The protein localises to the cytoplasm. It carries out the reaction (2R,3S)-3-isopropylmalate + NAD(+) = 4-methyl-2-oxopentanoate + CO2 + NADH. It participates in amino-acid biosynthesis; L-leucine biosynthesis; L-leucine from 3-methyl-2-oxobutanoate: step 3/4. Its function is as follows. Catalyzes the oxidation of 3-carboxy-2-hydroxy-4-methylpentanoate (3-isopropylmalate) to 3-carboxy-4-methyl-2-oxopentanoate. The product decarboxylates to 4-methyl-2 oxopentanoate. The sequence is that of 3-isopropylmalate dehydrogenase from Gluconobacter oxydans (strain 621H) (Gluconobacter suboxydans).